We begin with the raw amino-acid sequence, 485 residues long: Probable cobyric acid synthase (485 aa).

Residues 250–435 form the GATase cobBQ-type domain; sequence EVEIAVIRLP…LHGLFDNENI (186 aa). C328 (nucleophile) is an active-site residue. H427 is a catalytic residue.

This sequence belongs to the CobB/CobQ family. CobQ subfamily.

The protein operates within cofactor biosynthesis; adenosylcobalamin biosynthesis. Its function is as follows. Catalyzes amidations at positions B, D, E, and G on adenosylcobyrinic A,C-diamide. NH(2) groups are provided by glutamine, and one molecule of ATP is hydrogenolyzed for each amidation. This is Probable cobyric acid synthase from Methanosarcina acetivorans (strain ATCC 35395 / DSM 2834 / JCM 12185 / C2A).